We begin with the raw amino-acid sequence, 447 residues long: Argininosuccinate synthase (447 aa).

ATP-binding positions include 17–25 (AFSGGLDTS) and alanine 43. Tyrosine 99 contacts L-citrulline. ATP contacts are provided by glycine 129 and threonine 131. Residues threonine 131, asparagine 135, and aspartate 136 each coordinate L-aspartate. L-citrulline is bound at residue asparagine 135. Residue aspartate 136 coordinates ATP. Residues arginine 139 and serine 192 each contribute to the L-citrulline site. Aspartate 194 is a binding site for ATP. The L-citrulline site is built by threonine 201, glutamate 203, and glutamate 280.

Belongs to the argininosuccinate synthase family. Type 2 subfamily. As to quaternary structure, homotetramer.

The protein localises to the cytoplasm. The catalysed reaction is L-citrulline + L-aspartate + ATP = 2-(N(omega)-L-arginino)succinate + AMP + diphosphate + H(+). It functions in the pathway amino-acid biosynthesis; L-arginine biosynthesis; L-arginine from L-ornithine and carbamoyl phosphate: step 2/3. The chain is Argininosuccinate synthase from Janthinobacterium sp. (strain Marseille) (Minibacterium massiliensis).